A 564-amino-acid polypeptide reads, in one-letter code: Putative zinc metalloproteinase in scaA 5'region (564 aa).

Residues 1-564 (MTRLQDDFYD…KEADFSAEEF (564 aa)) form the Peptidase M13 domain. H478 serves as a coordination point for Zn(2+). Residue E479 is part of the active site. The Zn(2+) site is built by H482 and E538. D542 acts as the Proton donor in catalysis.

This sequence belongs to the peptidase M13 family. The cofactor is Zn(2+).

The polypeptide is Putative zinc metalloproteinase in scaA 5'region (Streptococcus gordonii (strain Challis / ATCC 35105 / BCRC 15272 / CH1 / DL1 / V288)).